The sequence spans 308 residues: Vomeronasal type-1 receptor 92 (308 aa).

The Extracellular segment spans residues 1-18 (MNKDNTLHTIMKITMFSE). A helical membrane pass occupies residues 19–39 (VSVGISANSILFFAHLCMLLG). The Cytoplasmic portion of the chain corresponds to 40 to 48 (ENRPKPFHL). A helical transmembrane segment spans residues 49–69 (YIVSLSLTQLILLITMGLIAV). Over 70–91 (DMFMSWGRWDSTPCQSLIYLHR) the chain is Extracellular. The cysteines at positions 83 and 170 are disulfide-linked. The helical transmembrane segment at 92 to 112 (LLRGFTLCAACLLNVFWMITL) threads the bilayer. Residues 113 to 132 (SPRSSCLSKFKHNSPHHISG) lie on the Cytoplasmic side of the membrane. The chain crosses the membrane as a helical span at residues 133–153 (AFLFLCVLYMSFSSHLLVSII). At 154–188 (ATPNLTSNIFMYVTQSCSLLPMSYSRTSTFSTTIA) the chain is on the extracellular side. N-linked (GlcNAc...) asparagine glycosylation occurs at asparagine 157. A helical membrane pass occupies residues 189-209 (IREAFLISLMALSSGFMVTLL). Residues 210–236 (WRHKKQAQHLHSTSLSSKASPERRATR) lie on the Cytoplasmic side of the membrane. A helical membrane pass occupies residues 237 to 257 (TILLLMSFFVVLYILENVVFY). The Extracellular segment spans residues 258-267 (SRMKFKDGSM). The chain crosses the membrane as a helical span at residues 268–288 (FYCVQIIVSHSYATISPFVFI). The Cytoplasmic segment spans residues 289 to 308 (CTEKHMTKILRSVCTRIINI).

This sequence belongs to the G-protein coupled receptor 1 family.

It is found in the cell membrane. Putative pheromone receptor implicated in the regulation of social as well as reproductive behavior. The sequence is that of Vomeronasal type-1 receptor 92 (Vom1r92) from Rattus norvegicus (Rat).